Consider the following 414-residue polypeptide: Succinylornithine transaminase (414 aa).

Position 260 is an N6-(pyridoxal phosphate)lysine (Lys260).

The protein belongs to the class-III pyridoxal-phosphate-dependent aminotransferase family. AstC subfamily. Pyridoxal 5'-phosphate is required as a cofactor.

The enzyme catalyses N(2)-succinyl-L-ornithine + 2-oxoglutarate = N-succinyl-L-glutamate 5-semialdehyde + L-glutamate. It participates in amino-acid degradation; L-arginine degradation via AST pathway; L-glutamate and succinate from L-arginine: step 3/5. In terms of biological role, catalyzes the transamination of N(2)-succinylornithine and alpha-ketoglutarate into N(2)-succinylglutamate semialdehyde and glutamate. Can also act as an acetylornithine aminotransferase. This is Succinylornithine transaminase from Yersinia pseudotuberculosis serotype O:1b (strain IP 31758).